We begin with the raw amino-acid sequence, 608 residues long: Microtubule-associated protein 70-3 (608 aa).

The segment at 1-23 (MADGVEEGNAVAPRGPARRRGTV) is disordered. Positions 40-346 (DPVRVELTRL…ARSEAQLKEK (307 aa)) form a coiled coil. Residues 224 to 458 (ILDKLQRQKV…HLLNRSTDAV (235 aa)) form a required for targeting to microtubules region. Disordered regions lie at residues 354-493 (LEDG…TANN) and 570-608 (DKEQ…RNYQ). The span at 363-379 (SGSSRLPTEGKSFSNGP) shows a compositional bias: polar residues. The segment covering 402-421 (RRSPSFHSRSSLSSSSSLVL) has biased composition (low complexity). Residues 476–493 (IENTNSNTDESNKETANN) are compositionally biased toward polar residues. Residues 542–576 (LTKAMEVEAKKMRREVAAMEKEVAAMRVDKEQEVK) are a coiled coil. Low complexity predominate over residues 586–608 (TGSSQVLSGSRSSSRSGLTRNYQ).

This sequence belongs to the MAP70 family.

It localises to the cytoplasm. The protein resides in the cytoskeleton. Functionally, plant-specific protein that interact with microtubules. The sequence is that of Microtubule-associated protein 70-3 (MAP70.3) from Oryza sativa subsp. japonica (Rice).